The sequence spans 635 residues: Threonine--tRNA ligase (635 aa).

The interval 1 to 152 is editing domain; that stretch reads MQLLLIHSDY…AKAAVKPEAA (152 aa). A catalytic region spans residues 215 to 514; the sequence is PHVELMRRLE…TEEGKVPMLP (300 aa). Zn(2+)-binding residues include Cys-307, His-359, and His-483.

This sequence belongs to the class-II aminoacyl-tRNA synthetase family. As to quaternary structure, homodimer. Zn(2+) is required as a cofactor.

The protein localises to the cytoplasm. The enzyme catalyses tRNA(Thr) + L-threonine + ATP = L-threonyl-tRNA(Thr) + AMP + diphosphate + H(+). Catalyzes the attachment of threonine to tRNA(Thr) in a two-step reaction: L-threonine is first activated by ATP to form Thr-AMP and then transferred to the acceptor end of tRNA(Thr). Also edits incorrectly charged L-seryl-tRNA(Thr). This is Threonine--tRNA ligase from Methanosarcina acetivorans (strain ATCC 35395 / DSM 2834 / JCM 12185 / C2A).